We begin with the raw amino-acid sequence, 84 residues long: Molybdopterin synthase sulfur carrier subunit (84 aa).

1-thioglycine; alternate is present on G84. G84 carries the glycyl adenylate; alternate modification.

The protein belongs to the MoaD family. MOCS2A subfamily. In terms of assembly, heterotetramer; composed of 2 small (MOCS2A) and 2 large (MOCS2B) subunits. C-terminal thiocarboxylation occurs in 2 steps, it is first acyl-adenylated (-COAMP) via the hesA/moeB/thiF part of MOCS3, then thiocarboxylated (-COSH) via the rhodanese domain of MOCS3.

The protein localises to the cytoplasm. The protein operates within cofactor biosynthesis; molybdopterin biosynthesis. Its function is as follows. Acts as a sulfur carrier required for molybdopterin biosynthesis. Component of the molybdopterin synthase complex that catalyzes the conversion of precursor Z into molybdopterin by mediating the incorporation of 2 sulfur atoms into precursor Z to generate a dithiolene group. In the complex, serves as sulfur donor by being thiocarboxylated (-COSH) at its C-terminus by MOCS3. After interaction with MOCS2B, the sulfur is then transferred to precursor Z to form molybdopterin. This Caenorhabditis briggsae protein is Molybdopterin synthase sulfur carrier subunit.